We begin with the raw amino-acid sequence, 434 residues long: Tryptophan dimethylallyltransferase nptA (434 aa).

L-tryptophan contacts are provided by residues 91 to 92 (SL) and Glu100. 3 residues coordinate substrate: Arg115, Lys202, and Tyr204. An L-tryptophan-binding site is contributed by Tyr206. Substrate-binding residues include Arg271, Lys273, Tyr275, Tyr358, Tyr423, and Tyr427.

It belongs to the tryptophan dimethylallyltransferase family. As to quaternary structure, homodimer.

The catalysed reaction is L-tryptophan + dimethylallyl diphosphate = 4-(3-methylbut-2-enyl)-L-tryptophan + diphosphate. It functions in the pathway secondary metabolite biosynthesis. Its function is as follows. Nonribosomal peptide synthase involved in the synthesis of nidulanin A and derived compounds. Nidulanin A is a tetracyclopeptide with the sequence L-Phe-L-Kyn-L-Val-D-Val and an isoprene unit N-linked to the amino group of L-kynurenine. The NRPS nlsA is responsible of the synthesis of the cyclopeptide and the prenyltransferase nptA adds the isoprene unit on the L-kynurenine residue of nidulanin A. Further modifications lead to additional oxygenated related compounds. This is Tryptophan dimethylallyltransferase nptA from Emericella nidulans (strain FGSC A4 / ATCC 38163 / CBS 112.46 / NRRL 194 / M139) (Aspergillus nidulans).